A 154-amino-acid polypeptide reads, in one-letter code: Prefoldin subunit 5 (154 aa).

Ala2 carries the N-acetylalanine modification. An N6-acetyllysine modification is found at Lys42. Phosphoserine is present on Ser56.

Belongs to the prefoldin subunit alpha family. In terms of assembly, heterohexamer of two PFD-alpha type and four PFD-beta type subunits. Binds to MYC; interacts with its N-terminal domain. In terms of tissue distribution, highly expressed in pancreas and skeletal muscle and moderately in other tissues.

It is found in the nucleus. Its subcellular location is the cytoplasm. Functionally, binds specifically to cytosolic chaperonin (c-CPN) and transfers target proteins to it. Binds to nascent polypeptide chain and promotes folding in an environment in which there are many competing pathways for nonnative proteins. Represses the transcriptional activity of MYC. In Homo sapiens (Human), this protein is Prefoldin subunit 5 (PFDN5).